The following is a 565-amino-acid chain: NAD-dependent malic enzyme (565 aa).

The active-site Proton donor is tyrosine 103. Catalysis depends on lysine 177, which acts as the Proton acceptor. Residues glutamate 248, aspartate 249, and aspartate 272 each contribute to the a divalent metal cation site. NAD(+) is bound by residues aspartate 272 and asparagine 419. Residue serine 445 is modified to Phosphoserine.

This sequence belongs to the malic enzymes family. Requires Mg(2+) as cofactor. Mn(2+) is required as a cofactor.

It catalyses the reaction (S)-malate + NAD(+) = pyruvate + CO2 + NADH. It carries out the reaction oxaloacetate + H(+) = pyruvate + CO2. The polypeptide is NAD-dependent malic enzyme (mae2) (Schizosaccharomyces pombe (strain 972 / ATCC 24843) (Fission yeast)).